A 273-amino-acid chain; its full sequence is Homeobox protein Nkx-2.2 (273 aa).

Disordered regions lie at residues 1-56 and 91-131; these read MSLT…LDAV and AASA…KRKR. The span at 20 to 38 shows a compositional bias: acidic residues; sequence DTNDEEGSVAEGPEEESEG. A DNA-binding region (homeobox) is located at residues 128 to 187; that stretch reads KRKRRVLFSKAQTYELERRFRQQRYLSAPEREHLASLIRLTPTQVKIWFQNHRYKMKRAR.

It belongs to the NK-2 homeobox family. As to quaternary structure, interacts with OLIG2.

It is found in the nucleus. Its function is as follows. Transcriptional activator involved in the development of insulin-producting beta cells in the endocrine pancreas. May also be involved in specifying diencephalic neuromeric boundaries, and in controlling the expression of genes that play a role in axonal guidance. Binds to elements within the NEUROD1 promoter. This is Homeobox protein Nkx-2.2 (NKX2-2) from Mesocricetus auratus (Golden hamster).